The primary structure comprises 585 residues: YTH domain-containing family protein 3 (585 aa).

Disordered stretches follow at residues M1–M52, R243–G277, and P304–Q351. N-acetylserine is present on S2. Over residues N15–I24 the composition is skewed to polar residues. Position 23 is a phosphoserine (S23). Residues K244–P254 show a composition bias toward basic residues. The span at Q329–Q351 shows a compositional bias: low complexity. The 135-residue stretch at G416 to I550 folds into the YTH domain. Residues K422–Y424, D428, W438–C439, N468, W492, and W497 each bind RNA.

It belongs to the YTHDF family. YTHDF3 subfamily. As to quaternary structure, interacts with CNOT1; promoting recruitment of the CCR4-NOT complex. Interacts with YTHDF1. Interacts with YTHDF2. Interacts with PAN3. Post-translationally, (Microbial infection) Proteolytically cleaved by HIV-1 protease when incorporated into HIV-1 particles in a nucleocapsid-dependent-manner. Cleavage by HIV-1 protease probably ensures optimal infectivity of the mature virion.

It is found in the cytoplasm. The protein resides in the cytosol. It localises to the P-body. Its subcellular location is the stress granule. Functionally, specifically recognizes and binds N6-methyladenosine (m6A)-containing RNAs, and regulates their stability. M6A is a modification present at internal sites of mRNAs and some non-coding RNAs and plays a role in mRNA stability and processing. Acts as a regulator of mRNA stability by promoting degradation of m6A-containing mRNAs via interaction with the CCR4-NOT complex or PAN3. The YTHDF paralogs (YTHDF1, YTHDF2 and YTHDF3) share m6A-containing mRNAs targets and act redundantly to mediate mRNA degradation and cellular differentiation. Acts as a negative regulator of type I interferon response by down-regulating interferon-stimulated genes (ISGs) expression: acts by binding to FOXO3 mRNAs. Binds to FOXO3 mRNAs independently of METTL3-mediated m6A modification. Can also act as a regulator of mRNA stability in cooperation with YTHDF2 by binding to m6A-containing mRNA and promoting their degradation. Recognizes and binds m6A-containing circular RNAs (circRNAs); circRNAs are generated through back-splicing of pre-mRNAs, a non-canonical splicing process promoted by dsRNA structures across circularizing exons. Promotes formation of phase-separated membraneless compartments, such as P-bodies or stress granules, by undergoing liquid-liquid phase separation upon binding to mRNAs containing multiple m6A-modified residues: polymethylated mRNAs act as a multivalent scaffold for the binding of YTHDF proteins, juxtaposing their disordered regions and thereby leading to phase separation. The resulting mRNA-YTHDF complexes then partition into different endogenous phase-separated membraneless compartments, such as P-bodies, stress granules or neuronal RNA granules. May also recognize and bind N1-methyladenosine (m1A)-containing mRNAs: inhibits trophoblast invasion by binding to m1A-methylated transcripts of IGF1R, promoting their degradation. Has some antiviral activity against HIV-1 virus: incorporated into HIV-1 particles in a nucleocapsid-dependent manner and reduces viral infectivity in the next cycle of infection. May interfere with this early step of the viral life cycle by binding to N6-methyladenosine (m6A) modified sites on the HIV-1 RNA genome. In Homo sapiens (Human), this protein is YTH domain-containing family protein 3.